A 279-amino-acid polypeptide reads, in one-letter code: Acetylglutamate kinase (279 aa).

Substrate-binding positions include 64-65 (GG), arginine 86, and asparagine 177.

It belongs to the acetylglutamate kinase family. ArgB subfamily.

The protein resides in the cytoplasm. The enzyme catalyses N-acetyl-L-glutamate + ATP = N-acetyl-L-glutamyl 5-phosphate + ADP. It participates in amino-acid biosynthesis; L-arginine biosynthesis; N(2)-acetyl-L-ornithine from L-glutamate: step 2/4. In terms of biological role, catalyzes the ATP-dependent phosphorylation of N-acetyl-L-glutamate. This is Acetylglutamate kinase from Campylobacter jejuni subsp. jejuni serotype O:2 (strain ATCC 700819 / NCTC 11168).